The chain runs to 345 residues: MTQANTNNAYGKDIAMTVIGAGSYGTSLAISLARNGANVILWGHEPEHMARLEADRANHEFLPGIDFPESLIIESDLEKAVQASRDLLVVVPSHVFGIVLNSCKPFLREDSRICWATKGLEPETGRLLKEVAFDIIGDSYSLAVLSGPTFAKELAMGMPTAISVASPDSAFVADLQEKIHCSKTFRVYANNDFIGMQLGGAVKNVIAIGAGMSDGIGFGANARTALITRGLAEMSRLGAALGAQPETFMGMAGLGDLVLTCTDNQSRNRRFGLALGQGKDVDTAQEEIGQVVEGYRNTKEVWMLSQRMGVEMPIVDQIYQVLYQGKDARLAAQDLLARDKKAEGK.

S23, Y24, H44, and K118 together coordinate NADPH. Sn-glycerol 3-phosphate contacts are provided by K118, G147, and T149. A151 contributes to the NADPH binding site. K203, D256, S266, R267, and N268 together coordinate sn-glycerol 3-phosphate. K203 serves as the catalytic Proton acceptor. R267 is a binding site for NADPH. Positions 291 and 293 each coordinate NADPH.

Belongs to the NAD-dependent glycerol-3-phosphate dehydrogenase family.

The protein resides in the cytoplasm. It carries out the reaction sn-glycerol 3-phosphate + NAD(+) = dihydroxyacetone phosphate + NADH + H(+). It catalyses the reaction sn-glycerol 3-phosphate + NADP(+) = dihydroxyacetone phosphate + NADPH + H(+). The protein operates within membrane lipid metabolism; glycerophospholipid metabolism. In terms of biological role, catalyzes the reduction of the glycolytic intermediate dihydroxyacetone phosphate (DHAP) to sn-glycerol 3-phosphate (G3P), the key precursor for phospholipid synthesis. The sequence is that of Glycerol-3-phosphate dehydrogenase [NAD(P)+] from Vibrio campbellii (strain ATCC BAA-1116).